Consider the following 472-residue polypeptide: Probable glycine dehydrogenase (decarboxylating) subunit 2 (472 aa).

The residue at position 268 (K268) is an N6-(pyridoxal phosphate)lysine.

The protein belongs to the GcvP family. C-terminal subunit subfamily. In terms of assembly, the glycine cleavage system is composed of four proteins: P, T, L and H. In this organism, the P 'protein' is a heterodimer of two subunits. Pyridoxal 5'-phosphate is required as a cofactor.

It carries out the reaction N(6)-[(R)-lipoyl]-L-lysyl-[glycine-cleavage complex H protein] + glycine + H(+) = N(6)-[(R)-S(8)-aminomethyldihydrolipoyl]-L-lysyl-[glycine-cleavage complex H protein] + CO2. Functionally, the glycine cleavage system catalyzes the degradation of glycine. The P protein binds the alpha-amino group of glycine through its pyridoxal phosphate cofactor; CO(2) is released and the remaining methylamine moiety is then transferred to the lipoamide cofactor of the H protein. In Thermoplasma acidophilum (strain ATCC 25905 / DSM 1728 / JCM 9062 / NBRC 15155 / AMRC-C165), this protein is Probable glycine dehydrogenase (decarboxylating) subunit 2.